The primary structure comprises 233 residues: Putative nosiheptide resistance regulatory protein (233 aa).

The segment at residues 93-112 (RKAARQAADYSRPMIEQAVA) is a DNA-binding region (H-T-H motif). Positions 190–233 (PPEATEVPESGRLTSVDGSAEAVLDPEVQAKEAAEEAAKRDDQA) are disordered. The span at 217 to 233 (VQAKEAAEEAAKRDDQA) shows a compositional bias: basic and acidic residues.

In terms of biological role, seems to be involved in the regulation of nhs expression. The chain is Putative nosiheptide resistance regulatory protein from Streptomyces actuosus.